A 769-amino-acid chain; its full sequence is Portal protein (769 aa).

Positions 458–479 (LEGYVNNLFKTIEGLKDVNSDL) are putative leucine zipper motif. 2 disordered regions span residues 654 to 675 (RGPR…DDER) and 750 to 769 (RQLT…DRRS). Residues 760–769 (VGCERRDRRS) show a composition bias toward basic and acidic residues.

The protein belongs to the herpesviridae portal protein family. In terms of assembly, homododecamerizes. Interacts with terminase subunits TRM1 and TRM3.

The protein resides in the virion. It localises to the host nucleus. In terms of biological role, forms a portal in the viral capsid through which viral DNA is translocated during DNA packaging. Assembles as a dodecamer at a single fivefold axe of the T=16 icosahedric capsid. Binds to the molecular motor that translocates the viral DNA, termed terminase. In Homo sapiens (Human), this protein is Portal protein (54).